We begin with the raw amino-acid sequence, 205 residues long: Holliday junction branch migration complex subunit RuvA (205 aa).

The segment at 1 to 62 (MFEYVTGYVE…EDIMALYGFK (62 aa)) is domain I. Positions 63 to 141 (TREERLLFTK…DVVPDAFVDL (79 aa)) are domain II. The tract at residues 142-152 (FSDEERFDEKK) is flexible linker. Positions 153 to 205 (GSSAELDEALEALRALGYAEREVSRVVPELLKESLTTDQYIKKALSLLLNGKR) are domain III.

This sequence belongs to the RuvA family. Homotetramer. Forms an RuvA(8)-RuvB(12)-Holliday junction (HJ) complex. HJ DNA is sandwiched between 2 RuvA tetramers; dsDNA enters through RuvA and exits via RuvB. An RuvB hexamer assembles on each DNA strand where it exits the tetramer. Each RuvB hexamer is contacted by two RuvA subunits (via domain III) on 2 adjacent RuvB subunits; this complex drives branch migration. In the full resolvosome a probable DNA-RuvA(4)-RuvB(12)-RuvC(2) complex forms which resolves the HJ.

It is found in the cytoplasm. The RuvA-RuvB-RuvC complex processes Holliday junction (HJ) DNA during genetic recombination and DNA repair, while the RuvA-RuvB complex plays an important role in the rescue of blocked DNA replication forks via replication fork reversal (RFR). RuvA specifically binds to HJ cruciform DNA, conferring on it an open structure. The RuvB hexamer acts as an ATP-dependent pump, pulling dsDNA into and through the RuvAB complex. HJ branch migration allows RuvC to scan DNA until it finds its consensus sequence, where it cleaves and resolves the cruciform DNA. This chain is Holliday junction branch migration complex subunit RuvA, found in Bacillus cereus (strain AH187).